Reading from the N-terminus, the 83-residue chain is U5-theraphotoxin-Hs1a 5 (83 aa).

The signal sequence occupies residues 1–21; the sequence is MKTSMFLTLTGLVLLFVVCYA. Residues 22–49 constitute a propeptide that is removed on maturation; it reads SESEEKEFPKELPSSIFAADSDFKVEER. Intrachain disulfides connect Cys-51-Cys-63, Cys-56-Cys-68, and Cys-62-Cys-75.

It belongs to the neurotoxin 10 (Hwtx-1) family. 51 (Hntx-8) subfamily. Hntx-8 sub-subfamily. Expressed by the venom gland.

It is found in the secreted. In terms of biological role, agglutinates erythrocytes. The polypeptide is U5-theraphotoxin-Hs1a 5 (Cyriopagopus schmidti (Chinese bird spider)).